The primary structure comprises 474 residues: ATP-dependent rRNA helicase RRP3 (474 aa).

The segment covering 1-10 (MPSMKRRKLS) has biased composition (basic residues). The interval 1 to 43 (MPSMKRRKLSHTPPQGEAEDGFSDSETSQASLQETPGNDEKIE) is disordered. Over residues 24 to 36 (DSETSQASLQETP) the composition is skewed to polar residues. The Q motif signature appears at 48–76 (KSFKDLGIIDSLCEACDSLGYKAPTQIQA). Residues 79–250 (IPLALQGRDL…RASLSNPLRV (172 aa)) form the Helicase ATP-binding domain. Position 92–99 (92–99 (AETGSGKT)) interacts with ATP. The short motif at 198 to 201 (DEAD) is the DEAD box element. One can recognise a Helicase C-terminal domain in the interval 278 to 422 (YLIYLLNEFP…EYKVEKEEVM (145 aa)). A disordered region spans residues 442 to 474 (LHENRGKKGATLRNRRIGKGAKRSRDEMDREEG). The segment covering 448–463 (KKGATLRNRRIGKGAK) has biased composition (basic residues). The span at 464–474 (RSRDEMDREEG) shows a compositional bias: basic and acidic residues.

It belongs to the DEAD box helicase family. DDX47/RRP3 subfamily. In terms of assembly, interacts with the SSU processome.

It is found in the nucleus. It catalyses the reaction ATP + H2O = ADP + phosphate + H(+). In terms of biological role, ATP-dependent rRNA helicase required for pre-ribosomal RNA processing. Involved in the maturation of the 35S-pre-rRNA and to its cleavage to mature 18S rRNA. The sequence is that of ATP-dependent rRNA helicase RRP3 from Coccidioides immitis (strain RS) (Valley fever fungus).